The primary structure comprises 291 residues: Oligopeptide transport system permease protein OppC (291 aa).

6 helical membrane-spanning segments follow: residues 22-42 (VASLAALLLLFVSAYALPPLL), 85-105 (MLIGVCVAVISTGIAATVGAI), 116-136 (TLMWVVDLLLVVPSFILIAIV), 142-162 (NSANIMFLVLLLAGFGWMISS), 209-229 (ALNVAAAILAETGLSFLGFGI), and 247-267 (ATAFPWVFLFPASILVLILVC). The region spanning 81–272 (MQKSMLIGVC…LILVCANLTG (192 aa)) is the ABC transmembrane type-1 domain.

The protein belongs to the binding-protein-dependent transport system permease family. OppBC subfamily. As to quaternary structure, the complex is composed of an ATP-binding protein (OppD), two transmembrane proteins (OppB and OppC) and a solute-binding protein (OppA).

Its subcellular location is the cell inner membrane. Functionally, part of the ABC transporter complex OppABCD involved in the uptake of oligopeptides. Responsible for the translocation of the substrate across the membrane. The chain is Oligopeptide transport system permease protein OppC from Mycobacterium bovis (strain ATCC BAA-935 / AF2122/97).